A 157-amino-acid chain; its full sequence is Protein Smg (157 aa).

The protein belongs to the Smg family.

The polypeptide is Protein Smg (Shigella boydii serotype 18 (strain CDC 3083-94 / BS512)).